Consider the following 450-residue polypeptide: Eukaryotic translation initiation factor 3 subunit E (450 aa).

One can recognise a PCI domain in the interval 255-424; that stretch reads TELFFSPAYI…GTVIMNHPPQ (170 aa).

It belongs to the eIF-3 subunit E family. As to quaternary structure, component of the eukaryotic translation initiation factor 3 (eIF-3) complex.

The protein localises to the cytoplasm. In terms of biological role, component of the eukaryotic translation initiation factor 3 (eIF-3) complex, which is involved in protein synthesis of a specialized repertoire of mRNAs and, together with other initiation factors, stimulates binding of mRNA and methionyl-tRNAi to the 40S ribosome. The eIF-3 complex specifically targets and initiates translation of a subset of mRNAs involved in cell proliferation. In Aspergillus clavatus (strain ATCC 1007 / CBS 513.65 / DSM 816 / NCTC 3887 / NRRL 1 / QM 1276 / 107), this protein is Eukaryotic translation initiation factor 3 subunit E (int6).